A 377-amino-acid polypeptide reads, in one-letter code: Erythronate-4-phosphate dehydrogenase (377 aa).

Substrate-binding residues include serine 45 and threonine 66. Residues aspartate 146 and threonine 175 each contribute to the NAD(+) site. Arginine 208 is an active-site residue. Position 232 (aspartate 232) interacts with NAD(+). Glutamate 237 is a catalytic residue. The Proton donor role is filled by histidine 254. Glycine 257 serves as a coordination point for NAD(+). Position 258 (tyrosine 258) interacts with substrate.

This sequence belongs to the D-isomer specific 2-hydroxyacid dehydrogenase family. PdxB subfamily. In terms of assembly, homodimer.

It is found in the cytoplasm. It catalyses the reaction 4-phospho-D-erythronate + NAD(+) = (R)-3-hydroxy-2-oxo-4-phosphooxybutanoate + NADH + H(+). The protein operates within cofactor biosynthesis; pyridoxine 5'-phosphate biosynthesis; pyridoxine 5'-phosphate from D-erythrose 4-phosphate: step 2/5. Functionally, catalyzes the oxidation of erythronate-4-phosphate to 3-hydroxy-2-oxo-4-phosphonooxybutanoate. The polypeptide is Erythronate-4-phosphate dehydrogenase (Sodalis glossinidius (strain morsitans)).